Reading from the N-terminus, the 620-residue chain is Apoptosis regulator MC163R (620 aa).

A helical transmembrane segment spans residues 113-133; sequence APLPLLLLPLLLPPMILLFFL.

The protein resides in the host mitochondrion. The protein localises to the host membrane. Functionally, plays a role in the inhibition of host apoptosis. Prevents host TNF-alpha-induced mitochondrial membrane permeabilization and reduces caspase-3/CASP3 and PARP1 cleavage induced by the intrinsic apoptotic pathway. In Homo sapiens (Human), this protein is Apoptosis regulator MC163R (MC163R).